Consider the following 139-residue polypeptide: Maximins 4/H3 type 6 (139 aa).

The signal sequence occupies residues 1-18; the sequence is MNFKYIVAVSFLIASAYA. The propeptide occupies 19–43; it reads RSVQNDEQSLSQRDVLEEESLREIR. Asn-70 carries the asparagine amide modification. Residues 74–118 constitute a propeptide that is removed on maturation; it reads TAEDHEVMKRLEAVMRDLDSLDHPEEASERETRGFNQDEIAKEKR. Ile-138 carries the isoleucine amide modification.

It belongs to the bombinin family. In terms of tissue distribution, expressed by the skin glands.

Its subcellular location is the secreted. Maximin-4 shows antibacterial activity against both Gram-positive and Gram-negative bacteria. It also shows antimicrobial activity against the fungus C.albicans, but not against A.flavus nor P.uticale. It has little hemolytic activity. It does not possess a significant cytotoxicity against tumor cell lines. It does not possess a significant anti-HIV activity. Its function is as follows. Maximin-H3 shows antibacterial activity against both Gram-positive and Gram-negative bacteria. It also shows antimicrobial activity against the fungus C.albicans. Shows strong hemolytic activity. The protein is Maximins 4/H3 type 6 of Bombina maxima (Giant fire-bellied toad).